We begin with the raw amino-acid sequence, 563 residues long: GTPase Obg (563 aa).

In terms of domain architecture, Obg spans 2–168 (SDFVDRVTVH…RDVILELKSI (167 aa)). Residues 169-349 (ADVALVGFPS…LNFALSALVH (181 aa)) enclose the OBG-type G domain. GTP contacts are provided by residues 175–182 (GFPSAGKS), 200–204 (FTTLV), 221–224 (DVPG), 301–304 (NKID), and 330–332 (STA). Mg(2+)-binding residues include Ser-182 and Thr-202. An OCT domain is found at 383–469 (DEGGSALEFT…ARMVEFDWDP (87 aa)). A disordered region spans residues 529 to 563 (RKAGHWADPTVDDDRHDETSLFGHGESSEDGETEE).

Belongs to the TRAFAC class OBG-HflX-like GTPase superfamily. OBG GTPase family. In terms of assembly, monomer. Requires Mg(2+) as cofactor.

It is found in the cytoplasm. An essential GTPase which binds GTP, GDP and possibly (p)ppGpp with moderate affinity, with high nucleotide exchange rates and a fairly low GTP hydrolysis rate. Plays a role in control of the cell cycle, stress response, ribosome biogenesis and in those bacteria that undergo differentiation, in morphogenesis control. This is GTPase Obg from Bifidobacterium longum (strain NCC 2705).